The sequence spans 59 residues: UPF0339 protein CC_2965 (59 aa).

Belongs to the UPF0339 family.

This Caulobacter vibrioides (strain ATCC 19089 / CIP 103742 / CB 15) (Caulobacter crescentus) protein is UPF0339 protein CC_2965.